The sequence spans 330 residues: D-alanine--D-alanine ligase (330 aa).

The 207-residue stretch at 120–326 (KLWLSALDIP…FKQFLEGIIR (207 aa)) folds into the ATP-grasp domain. 150–205 (AFRNWGAVFVKAASQGSSVGCYKVTDAAKLSEAVNAAFGYSDQVLVEKAVRPRELE) contacts ATP. Residues D280, E293, and N295 each coordinate Mg(2+).

The protein belongs to the D-alanine--D-alanine ligase family. Mg(2+) is required as a cofactor. The cofactor is Mn(2+).

The protein localises to the cytoplasm. It catalyses the reaction 2 D-alanine + ATP = D-alanyl-D-alanine + ADP + phosphate + H(+). Its pathway is cell wall biogenesis; peptidoglycan biosynthesis. Cell wall formation. This chain is D-alanine--D-alanine ligase, found in Tolumonas auensis (strain DSM 9187 / NBRC 110442 / TA 4).